Reading from the N-terminus, the 160-residue chain is Crossover junction endodeoxyribonuclease RuvC (160 aa).

Catalysis depends on residues Asp-7, Glu-73, and Asp-145. Mg(2+) is bound by residues Asp-7, Glu-73, and Asp-145.

It belongs to the RuvC family. In terms of assembly, homodimer which binds Holliday junction (HJ) DNA. The HJ becomes 2-fold symmetrical on binding to RuvC with unstacked arms; it has a different conformation from HJ DNA in complex with RuvA. In the full resolvosome a probable DNA-RuvA(4)-RuvB(12)-RuvC(2) complex forms which resolves the HJ. Mg(2+) serves as cofactor.

The protein resides in the cytoplasm. It catalyses the reaction Endonucleolytic cleavage at a junction such as a reciprocal single-stranded crossover between two homologous DNA duplexes (Holliday junction).. Its function is as follows. The RuvA-RuvB-RuvC complex processes Holliday junction (HJ) DNA during genetic recombination and DNA repair. Endonuclease that resolves HJ intermediates. Cleaves cruciform DNA by making single-stranded nicks across the HJ at symmetrical positions within the homologous arms, yielding a 5'-phosphate and a 3'-hydroxyl group; requires a central core of homology in the junction. The consensus cleavage sequence is 5'-(A/T)TT(C/G)-3'. Cleavage occurs on the 3'-side of the TT dinucleotide at the point of strand exchange. HJ branch migration catalyzed by RuvA-RuvB allows RuvC to scan DNA until it finds its consensus sequence, where it cleaves and resolves the cruciform DNA. This is Crossover junction endodeoxyribonuclease RuvC from Synechococcus sp. (strain CC9311).